Consider the following 525-residue polypeptide: GMP synthase [glutamine-hydrolyzing] (525 aa).

One can recognise a Glutamine amidotransferase type-1 domain in the interval 9 to 207 (KILILDFGSQ…IVDICGCDTL (199 aa)). The active-site Nucleophile is Cys-86. Active-site residues include His-181 and Glu-183. The GMPS ATP-PPase domain maps to 208 to 400 (WTPANIAQDA…LGLPYDMVYR (193 aa)). 235–241 (SGGVDSS) contacts ATP.

As to quaternary structure, homodimer.

It catalyses the reaction XMP + L-glutamine + ATP + H2O = GMP + L-glutamate + AMP + diphosphate + 2 H(+). It participates in purine metabolism; GMP biosynthesis; GMP from XMP (L-Gln route): step 1/1. Functionally, catalyzes the synthesis of GMP from XMP. The chain is GMP synthase [glutamine-hydrolyzing] from Marinomonas sp. (strain MWYL1).